Here is an 837-residue protein sequence, read N- to C-terminus: Protein TRANSPARENT TESTA 9 (837 aa).

The FPL domain maps to 42–192 (LRSIAEILTY…AVRALTLNVY (151 aa)). The disordered stretch occupies residues 366 to 386 (TEEANQQCSSTAAGMSDDGNS). Polar residues predominate over residues 368–378 (EANQQCSSTAA).

It belongs to the CLEC16A/gop-1 family.

It localises to the golgi apparatus membrane. Involved in membrane trafficking and vacuole development through membrane fusion at the vacuole. Required for membrane trafficking machinery and accumulation of flavonoids in the seed coat. In Arabidopsis thaliana (Mouse-ear cress), this protein is Protein TRANSPARENT TESTA 9.